Reading from the N-terminus, the 215-residue chain is Cytidylate kinase (215 aa).

Residue 11–19 (GPTASGKGT) coordinates ATP.

Belongs to the cytidylate kinase family. Type 1 subfamily.

The protein resides in the cytoplasm. The catalysed reaction is CMP + ATP = CDP + ADP. It carries out the reaction dCMP + ATP = dCDP + ADP. The protein is Cytidylate kinase of Polynucleobacter necessarius subsp. necessarius (strain STIR1).